The primary structure comprises 408 residues: Probable fructose-2,6-bisphosphatase C732.02c (408 aa).

Residue 16-24 (GLPASGKTS) coordinates ATP. Asp-88 is an active-site residue. Residue 127 to 132 (NITDMC) coordinates ATP. Tyr-157 serves as a coordination point for beta-D-fructose 6-phosphate. Residue Arg-213 participates in beta-D-fructose 2,6-bisphosphate binding. His-214 acts as the Tele-phosphohistidine intermediate in catalysis. Asn-220 and Gly-226 together coordinate beta-D-fructose 2,6-bisphosphate. Glu-285 serves as the catalytic Proton donor/acceptor. Tyr-296, Arg-310, Lys-314, Tyr-325, Gln-351, and Arg-355 together coordinate beta-D-fructose 2,6-bisphosphate. 307–310 (AELR) contacts ATP. Residues 351-355 (QAILR) and Tyr-387 contribute to the ATP site.

This sequence in the C-terminal section; belongs to the phosphoglycerate mutase family.

The catalysed reaction is beta-D-fructose 2,6-bisphosphate + H2O = beta-D-fructose 6-phosphate + phosphate. Its function is as follows. This is predominantly if not solely a fructose-2,6-bisphosphatase. The chain is Probable fructose-2,6-bisphosphatase C732.02c from Schizosaccharomyces pombe (strain 972 / ATCC 24843) (Fission yeast).